The following is a 690-amino-acid chain: Iron-sulfur clusters transporter ATM1, mitochondrial (690 aa).

Residues 1–26 (MLLLPRCPVIGRIVRSKFRSGLIRNH) constitute a mitochondrion transit peptide. Residues 27–110 (SPVIFTVSKL…PKGNNKVRIR (84 aa)) are Mitochondrial matrix-facing. Residues 111–132 (VLIALGLLISAKILNVQVPFFF) form a helical membrane-spanning segment. The 291-residue stretch at 111–401 (VLIALGLLIS…LGSVYRDLKQ (291 aa)) folds into the ABC transmembrane type-1 domain. Residues 133-155 (KQTIDSMNIAWDDPTVALPAAIG) lie on the Mitochondrial intermembrane side of the membrane. A helical transmembrane segment spans residues 156 to 179 (LTILCYGVARFGSVLFGELRNAVF). Residues 180–228 (AKVAQNAIRTVSLQTFQHLMKLDLGWHLSRQTGGLTRAMDRGTKGISQV) are Mitochondrial matrix-facing. A helical transmembrane segment spans residues 229–252 (LTAMVFHIIPISFEISVVCGILTY). Residue Gln-253 is a topological domain, mitochondrial intermembrane. The helical transmembrane segment at 254–274 (FGASFAAITFSTMLLYSIFTI) threads the bilayer. At 275–340 (KTTAWRTHFR…SQIKVSQSLA (66 aa)) the chain is on the mitochondrial matrix side. Glutathione is bound by residues 280–284 (RTHFR) and 343–346 (NSGQ). The helical transmembrane segment at 341-359 (FLNSGQNLIFTTALTAMMY) threads the bilayer. Residues 360–374 (MGCTGVIGGNLTVGD) are Mitochondrial intermembrane-facing. A helical transmembrane segment spans residues 375 to 396 (LVLINQLVFQLSVPLNFLGSVY). Gly-393 lines the glutathione pocket. Over 397-690 (RDLKQSLIDM…ENELKDQQEL (294 aa)) the chain is Mitochondrial matrix. One can recognise an ABC transporter domain in the interval 436–672 (ITFENVTFGY…PGSLYRELWT (237 aa)). ATP contacts are provided by residues Tyr-445 and 469 to 480 (GSSGSGKSTILK).

The protein belongs to the ABC transporter superfamily. ABCB family. Heavy Metal importer (TC 3.A.1.210) subfamily. Homodimer.

It is found in the mitochondrion inner membrane. Performs an essential function in the generation of cytoplasmic iron-sulfur proteins by mediating the ATP-dependent export of Fe/S cluster precursors synthesized by NFS1 and other mitochondrial proteins. Hydrolyzes ATP. Binds glutathione and may function by transporting a glutathione-conjugated iron-sulfur compound. The chain is Iron-sulfur clusters transporter ATM1, mitochondrial from Saccharomyces cerevisiae (strain ATCC 204508 / S288c) (Baker's yeast).